The chain runs to 453 residues: o-phthalyl amidase (453 aa).

Monomer. In terms of processing, the N-terminus is blocked.

It catalyses the reaction a phtalamide + H2O = phthalate + a primary amine. Inhibited by iodoacetate, p-hydroxymercuric benzoate and copper ions. In terms of biological role, catalyzes the removal of the phthalyl group from phthalyl amides generating phthalate and an amine. The enzyme has a broad substrate specificity and hydrolyzes phthalylated amino acids, peptides, beta-lactams, aromatic and aliphatic amines; substitutions allowed on the phthalyl group include 6-F, 6-NH(2), 3-OH, and a nitrogen in the aromatic ring ortho to the carboxy group attached to the amine. The chain is o-phthalyl amidase from Xanthobacter agilis.